The primary structure comprises 78 residues: Large ribosomal subunit protein bL28 (78 aa).

The segment at 1–21 (MSRVCQVTGKRPVSGNNRSHA) is disordered.

The protein belongs to the bacterial ribosomal protein bL28 family.

In Serratia proteamaculans (strain 568), this protein is Large ribosomal subunit protein bL28.